Here is a 952-residue protein sequence, read N- to C-terminus: Leucine--tRNA ligase (952 aa).

A 'HIGH' region motif is present at residues 66 to 77 (PYPSGAGLHVGH). Residues 722–726 (KMGKS) carry the 'KMSKS' region motif. Lysine 725 is a binding site for ATP.

This sequence belongs to the class-I aminoacyl-tRNA synthetase family.

It is found in the cytoplasm. The enzyme catalyses tRNA(Leu) + L-leucine + ATP = L-leucyl-tRNA(Leu) + AMP + diphosphate. This chain is Leucine--tRNA ligase, found in Corynebacterium glutamicum (strain ATCC 13032 / DSM 20300 / JCM 1318 / BCRC 11384 / CCUG 27702 / LMG 3730 / NBRC 12168 / NCIMB 10025 / NRRL B-2784 / 534).